Here is a 214-residue protein sequence, read N- to C-terminus: Probable DNA (cytosine-5)-methyltransferase (214 aa).

C62 is an active-site residue.

Belongs to the class I-like SAM-binding methyltransferase superfamily. C5-methyltransferase family. As to quaternary structure, probably requires another subunit for function.

The catalysed reaction is a 2'-deoxycytidine in DNA + S-adenosyl-L-methionine = a 5-methyl-2'-deoxycytidine in DNA + S-adenosyl-L-homocysteine + H(+). In terms of biological role, this is probably the methylase that recognizes and modifies 5'-CpG-3'. This is Probable DNA (cytosine-5)-methyltransferase from Dryophytes versicolor (chameleon treefrog).